We begin with the raw amino-acid sequence, 52 residues long: Large ribosomal subunit protein bL32c (52 aa).

Belongs to the bacterial ribosomal protein bL32 family.

The protein resides in the plastid. It is found in the chloroplast. This Eucalyptus globulus subsp. globulus (Tasmanian blue gum) protein is Large ribosomal subunit protein bL32c.